Reading from the N-terminus, the 166-residue chain is Sec-independent protein translocase protein TatB (166 aa).

The chain crosses the membrane as a helical span at residues 1–21 (MIDIAFSKLAIIGVAALVFIG). The segment at 85–146 (DSSLHSAWDE…SGQKSRVISG (62 aa)) is disordered.

Belongs to the TatB family. As to quaternary structure, the Tat system comprises two distinct complexes: a TatABC complex, containing multiple copies of TatA, TatB and TatC subunits, and a separate TatA complex, containing only TatA subunits. Substrates initially bind to the TatABC complex, which probably triggers association of the separate TatA complex to form the active translocon.

The protein localises to the cell inner membrane. Part of the twin-arginine translocation (Tat) system that transports large folded proteins containing a characteristic twin-arginine motif in their signal peptide across membranes. Together with TatC, TatB is part of a receptor directly interacting with Tat signal peptides. TatB may form an oligomeric binding site that transiently accommodates folded Tat precursor proteins before their translocation. In Herminiimonas arsenicoxydans, this protein is Sec-independent protein translocase protein TatB.